The primary structure comprises 174 residues: Squamosa promoter-binding-like protein 4 (174 aa).

Residues 1–42 form a disordered region; it reads MEGKRSQGQGYMKKKSYLVEEDMETDTDEEEEVGRDRVRGSR. Positions 19 to 33 are enriched in acidic residues; sequence VEEDMETDTDEEEEV. Residues 51–128 form an SBP-type zinc finger; the sequence is LRLCQVDRCT…AGHNERRRKS (78 aa). C54, C59, C76, H79, C95, C98, H102, and C114 together coordinate Zn(2+). The Bipartite nuclear localization signal motif lies at 111-127; the sequence is KRSCRRRLAGHNERRRK. Positions 118-127 are enriched in basic residues; sequence LAGHNERRRK. Disordered stretches follow at residues 118 to 148 and 155 to 174; these read LAGH…GQVV and SRVE…PQIR. A compositionally biased stretch (polar residues) spans 163-174; it reads MPNSSFKRPQIR.

It depends on Zn(2+) as a cofactor. Expressed in the rib meristem and inter-primordial tissue of the inflorescence apex.

Its subcellular location is the nucleus. It is found in the cytoplasm. In terms of biological role, trans-acting factor that binds specifically to the consensus nucleotide sequence 5'-TNCGTACAA-3' of AP1 promoter. Promotes both vegetative phase change and flowering. This Arabidopsis thaliana (Mouse-ear cress) protein is Squamosa promoter-binding-like protein 4 (SPL4).